A 346-amino-acid polypeptide reads, in one-letter code: NADH-ubiquinone oxidoreductase chain 2 (346 aa).

Transmembrane regions (helical) follow at residues 25-45 (HWVL…PLIS), 60-80 (FLTQ…NAWA), 95-115 (CLLL…HFWF), 124-144 (LMTA…LLLM), 149-169 (LNPA…GWMG), 178-195 (ILAF…IILV), 200-219 (LALL…FMAL), 247-267 (VLLS…WLII), 274-294 (EMTP…FFYL), and 326-346 (AILA…HAIV).

This sequence belongs to the complex I subunit 2 family.

The protein localises to the mitochondrion inner membrane. It catalyses the reaction a ubiquinone + NADH + 5 H(+)(in) = a ubiquinol + NAD(+) + 4 H(+)(out). Functionally, core subunit of the mitochondrial membrane respiratory chain NADH dehydrogenase (Complex I) that is believed to belong to the minimal assembly required for catalysis. Complex I functions in the transfer of electrons from NADH to the respiratory chain. The immediate electron acceptor for the enzyme is believed to be ubiquinone. This Anas capensis (Cape teal) protein is NADH-ubiquinone oxidoreductase chain 2 (MT-ND2).